A 451-amino-acid chain; its full sequence is Uronate isomerase (451 aa).

This sequence belongs to the metallo-dependent hydrolases superfamily. Uronate isomerase family.

It catalyses the reaction D-glucuronate = D-fructuronate. It carries out the reaction aldehydo-D-galacturonate = keto-D-tagaturonate. Its pathway is carbohydrate metabolism; pentose and glucuronate interconversion. This is Uronate isomerase from Thermotoga petrophila (strain ATCC BAA-488 / DSM 13995 / JCM 10881 / RKU-1).